A 540-amino-acid chain; its full sequence is Serine/threonine-protein phosphatase ppzA (540 aa).

Disordered regions lie at residues 1-108 and 120-140; these read MGQS…KRGH and VDHVSDVPPTGAAPTGPSTQK. Composition is skewed to polar residues over residues 15-24 and 45-54; these read SLQSYPSFSR and SDSPRGSTAG. Low complexity predominate over residues 62 to 88; sequence AASVKSTTSRRSSTNQSVQSPDDTPSQ. Pro residues predominate over residues 89-98; sequence PDAPEPPPSP. The segment covering 127 to 136 has biased composition (low complexity); that stretch reads PPTGAAPTGP. Mn(2+) contacts are provided by aspartate 239, histidine 241, aspartate 267, and asparagine 299. The 283-residue stretch at 258 to 540 folds into the Phosphatase tensin-type domain; sequence PASNYLFLGD…SLVTSWGISR (283 aa). Histidine 300 (proton donor) is an active-site residue. Histidine 348 and histidine 423 together coordinate Mn(2+).

It belongs to the PPP phosphatase family. PP-Z subfamily. Interacts with at least 54 proteins, of which 31 are detected only after iron starvation and 22 are detected only in control conditions. Only the regulatory subunit of the protein phosphatase PP1 (Afu1g04800/AFUB_005140) interacts with ppzA in both conditions. Mn(2+) serves as cofactor.

The protein localises to the cytoplasm. It carries out the reaction O-phospho-L-seryl-[protein] + H2O = L-seryl-[protein] + phosphate. The catalysed reaction is O-phospho-L-threonyl-[protein] + H2O = L-threonyl-[protein] + phosphate. Functionally, catalytic subunit of protein phosphatase Z (PPZ) involved in iron assimilation. Regulates secondary metabolites production, including gliotoxin, pyripyropene A, fumagillin, fumiquinazoline A, triacetyl-fusarinine C, and helvolic acid. Plays a key role in pathogenicity. This is Serine/threonine-protein phosphatase ppzA from Aspergillus fumigatus (strain CBS 144.89 / FGSC A1163 / CEA10) (Neosartorya fumigata).